The chain runs to 411 residues: Adherens junction-associated protein 1 (411 aa).

Positions 1-43 (MWIQQLLGLSSMPIRWPGRSLGSHLWILIAMLQLAVDFPSCDS) are cleaved as a signal peptide. At 44 to 283 (LGPGPEFRLL…GETSGLAVHQ (240 aa)) the chain is on the extracellular side. 3 stretches are compositionally biased toward low complexity: residues 62–76 (LWSLRTGPPTRLPTP), 121–145 (PPAATRSSPSLTSASASSSMTAGAA), and 247–264 (TPVGVSTTEPSTSPSNNG). Disordered stretches follow at residues 62–156 (LWSL…RGRR) and 242–270 (DPWKRTPVGVSTTEPSTSPSNNGKDIQPP). The helical transmembrane segment at 284–304 (IITITVSLIMVIAALITTLVL) threads the bilayer. The interval 304–411 (LKNCCAPSGH…VSEKWFEISC (108 aa)) is targeting signals. Over 305–411 (KNCCAPSGHT…VSEKWFEISC (107 aa)) the chain is Cytoplasmic.

Forms a complex with CDH1 and CTNNB1; interacts directly with CTNNB1. Interacts with AP1M2 and with isoform 2 of BSG/CD147.

It localises to the basolateral cell membrane. The protein resides in the apical cell membrane. Its subcellular location is the cell junction. The protein localises to the adherens junction. Its function is as follows. Plays a role in cell adhesion and cell migration. In Rattus norvegicus (Rat), this protein is Adherens junction-associated protein 1 (Ajap1).